Reading from the N-terminus, the 112-residue chain is T cell receptor alpha variable 13-1 (112 aa).

An N-terminal signal peptide occupies residues 1–20 (MTSIRAVFIFLWLQLDLVNG). The Ig-like domain maps to 21 to 112 (ENVEQHPSTL…DSAVYFCAAS (92 aa)). A disulfide bond links Cys42 and Cys109. A glycan (N-linked (GlcNAc...) asparagine) is linked at Asn86.

As to quaternary structure, alpha-beta TR is a heterodimer composed of an alpha and beta chain; disulfide-linked. The alpha-beta TR is associated with the transmembrane signaling CD3 coreceptor proteins to form the TR-CD3 (TcR or TCR). The assembly of alpha-beta TR heterodimers with CD3 occurs in the endoplasmic reticulum where a single alpha-beta TR heterodimer associates with one CD3D-CD3E heterodimer, one CD3G-CD3E heterodimer and one CD247 homodimer forming a stable octameric structure. CD3D-CD3E and CD3G-CD3E heterodimers preferentially associate with TR alpha and TR beta chains, respectively. The association of the CD247 homodimer is the last step of TcR assembly in the endoplasmic reticulum and is required for transport to the cell surface.

It localises to the cell membrane. In terms of biological role, v region of the variable domain of T cell receptor (TR) alpha chain that participates in the antigen recognition. Alpha-beta T cell receptors are antigen specific receptors which are essential to the immune response and are present on the cell surface of T lymphocytes. Recognize peptide-major histocompatibility (MH) (pMH) complexes that are displayed by antigen presenting cells (APC), a prerequisite for efficient T cell adaptive immunity against pathogens. Binding of alpha-beta TR to pMH complex initiates TR-CD3 clustering on the cell surface and intracellular activation of LCK that phosphorylates the ITAM motifs of CD3G, CD3D, CD3E and CD247 enabling the recruitment of ZAP70. In turn ZAP70 phosphorylates LAT, which recruits numerous signaling molecules to form the LAT signalosome. The LAT signalosome propagates signal branching to three major signaling pathways, the calcium, the mitogen-activated protein kinase (MAPK) kinase and the nuclear factor NF-kappa-B (NF-kB) pathways, leading to the mobilization of transcription factors that are critical for gene expression and essential for T cell growth and differentiation. The T cell repertoire is generated in the thymus, by V-(D)-J rearrangement. This repertoire is then shaped by intrathymic selection events to generate a peripheral T cell pool of self-MH restricted, non-autoaggressive T cells. Post-thymic interaction of alpha-beta TR with the pMH complexes shapes TR structural and functional avidity. This Homo sapiens (Human) protein is T cell receptor alpha variable 13-1.